A 248-amino-acid chain; its full sequence is Probable transcriptional regulatory protein Bind_0345 (248 aa).

The protein belongs to the TACO1 family.

Its subcellular location is the cytoplasm. The polypeptide is Probable transcriptional regulatory protein Bind_0345 (Beijerinckia indica subsp. indica (strain ATCC 9039 / DSM 1715 / NCIMB 8712)).